A 76-amino-acid chain; its full sequence is Small ribosomal subunit protein bS18 (76 aa).

It belongs to the bacterial ribosomal protein bS18 family. In terms of assembly, part of the 30S ribosomal subunit. Forms a tight heterodimer with protein bS6.

Its function is as follows. Binds as a heterodimer with protein bS6 to the central domain of the 16S rRNA, where it helps stabilize the platform of the 30S subunit. The chain is Small ribosomal subunit protein bS18 from Ectopseudomonas mendocina (strain ymp) (Pseudomonas mendocina).